The following is a 122-amino-acid chain: Neuropeptide B (122 aa).

The N-terminal stretch at 1–24 (MAGPAMLVAAALALCLLLASPGLA) is a signal peptide. Trp25 carries the 6'-bromotryptophan modification. The propeptide occupies 56–122 (SEPRGGTRSL…LSLSASDCRK (67 aa)).

Belongs to the neuropeptide B/W family.

Its subcellular location is the secreted. May be involved in the regulation of feeding, neuroendocrine system, memory, learning and in the afferent pain pathway. This Bos taurus (Bovine) protein is Neuropeptide B (NPB).